The primary structure comprises 495 residues: Pleckstrin homology domain-containing family O member 2 (495 aa).

In terms of domain architecture, PH spans Thr-18–Asn-120. Phosphoserine occurs at positions 165 and 168. Residues Leu-171–Lys-411 are disordered. A compositionally biased stretch (pro residues) spans Gln-198–Gly-213. Position 233 is a phosphothreonine (Thr-233). Residues Asp-235–Glu-244 show a composition bias toward polar residues. Phosphoserine occurs at positions 236, 238, 239, 274, and 292. Thr-296 carries the post-translational modification Phosphothreonine. Over residues Ser-324–Ser-335 the composition is skewed to low complexity. Residues Glu-336–Val-350 show a composition bias toward polar residues. Ser-395 carries the post-translational modification Phosphoserine. Positions Leu-399–Lys-411 are enriched in basic and acidic residues. Positions Cys-444–Leu-469 form a coiled coil.

This Mus musculus (Mouse) protein is Pleckstrin homology domain-containing family O member 2 (Plekho2).